Here is a 236-residue protein sequence, read N- to C-terminus: Uridylate kinase (236 aa).

9–12 (KISG) serves as a coordination point for ATP. G51 provides a ligand contact to UMP. ATP contacts are provided by G52 and R56. Residues D71 and 132–139 (TGNSHFTT) contribute to the UMP site. Residues Y166 and D169 each coordinate ATP.

This sequence belongs to the UMP kinase family. In terms of assembly, homohexamer.

The protein resides in the cytoplasm. The catalysed reaction is UMP + ATP = UDP + ADP. It participates in pyrimidine metabolism; CTP biosynthesis via de novo pathway; UDP from UMP (UMPK route): step 1/1. With respect to regulation, inhibited by UTP. Functionally, catalyzes the reversible phosphorylation of UMP to UDP. This Mycoplasmoides gallisepticum (strain R(low / passage 15 / clone 2)) (Mycoplasma gallisepticum) protein is Uridylate kinase.